Reading from the N-terminus, the 453-residue chain is Gamma-aminobutyric acid receptor subunit alpha-6 (453 aa).

The signal sequence occupies residues 1–19 (MASSLPWLCIILWLENALG). Residues 20 to 243 (KLEVEGNFYS…FHLQRKMGYF (224 aa)) lie on the Extracellular side of the membrane. An N-linked (GlcNAc...) asparagine glycan is attached at asparagine 31. Arginine 84 contributes to the 4-aminobutanoate binding site. 2 N-linked (GlcNAc...) asparagine glycosylation sites follow: asparagine 128 and asparagine 141. Threonine 147 contributes to the 4-aminobutanoate binding site. Cysteine 156 and cysteine 170 are disulfide-bonded. Residues 244–264 (MIQIYTPCIMTVILSQVSFWI) form a helical membrane-spanning segment. Topologically, residues 265–270 (NKESVP) are cytoplasmic. A helical membrane pass occupies residues 271–290 (ARTVFGITTVLTMTTLSISA). Residues 291–304 (RHSLPKVSYATAMD) are Extracellular-facing. Residues 305–325 (WFIAVCFAFVFSALIEFAAVN) traverse the membrane as a helical segment. Residues 326 to 422 (YFTNLQTQKA…GTSKIDQYSR (97 aa)) lie on the Cytoplasmic side of the membrane. Threonine 403 is subject to Phosphothreonine. The chain crosses the membrane as a helical span at residues 423–443 (ILFPVAFAGFNLVYWVVYLSK). At 444–453 (DTMEVSSSVE) the chain is on the extracellular side.

It belongs to the ligand-gated ion channel (TC 1.A.9) family. Gamma-aminobutyric acid receptor (TC 1.A.9.5) subfamily. GABRA6 sub-subfamily. Heteropentamer, formed by a combination of alpha (GABRA1-6), beta (GABRB1-3), gamma (GABRG1-3), delta (GABRD), epsilon (GABRE), rho (GABRR1-3), pi (GABRP) and theta (GABRQ) chains, each subunit exhibiting distinct physiological and pharmacological properties. Binds UBQLN1. Expressed in brain, in cerebellar granule cells.

Its subcellular location is the postsynaptic cell membrane. The protein resides in the cell membrane. The enzyme catalyses chloride(in) = chloride(out). Its function is as follows. Alpha subunit of the heteropentameric ligand-gated chloride channel gated by gamma-aminobutyric acid (GABA), a major inhibitory neurotransmitter in the brain. GABA-gated chloride channels, also named GABA(A) receptors (GABAAR), consist of five subunits arranged around a central pore and contain GABA active binding site(s) located at the alpha and beta subunit interface(s). When activated by GABA, GABAARs selectively allow the flow of chloride anions across the cell membrane down their electrochemical gradient. Alpha-6/GABRA6 subunits are found at both synaptic and extrasynaptic sites. Chloride influx into the postsynaptic neuron following GABAAR opening decreases the neuron ability to generate a new action potential, thereby reducing nerve transmission. Extrasynaptic alpha-6-containing receptors contribute to the tonic GABAergic inhibition. Alpha-6 subunits are also present on glutamatergic synapses. This Homo sapiens (Human) protein is Gamma-aminobutyric acid receptor subunit alpha-6.